The chain runs to 219 residues: Glutamine transport system permease protein GlnP (219 aa).

At 1-22 (MQFDWSAIWPAIPLLIEGAKMT) the chain is on the periplasmic side. Residues 19–209 (AKMTLWISVL…IITLVLSFIL (191 aa)) form the ABC transmembrane type-1 domain. The chain crosses the membrane as a helical span at residues 23–43 (LWISVLGLAGGLVIGLLAGFA). The Cytoplasmic portion of the chain corresponds to 44–53 (RTFGGWIANH). Residues 54–74 (VALVFIEVIRGTPIVVQVMFI) form a helical membrane-spanning segment. Residues 75–88 (YFALPMAFNDLRID) are Periplasmic-facing. Residues 89–109 (PFTAAVVTIMINSGAYIAEIT) form a helical membrane-spanning segment. Residues 110-150 (RGAVLSIHKGFREAGLALGLSRWETIRYVILPLALRRMLPP) lie on the Cytoplasmic side of the membrane. The helical transmembrane segment at 151-171 (LGNQWIISIKDTSLFIVIGVA) threads the bilayer. Over 172-187 (ELTRQGQEIIAGNFRA) the chain is Periplasmic. The chain crosses the membrane as a helical span at residues 188–208 (LEIWSAVAVFYLIITLVLSFI). At 209-219 (LRRLERRMKIL) the chain is on the cytoplasmic side.

The protein belongs to the binding-protein-dependent transport system permease family. HisMQ subfamily.

It is found in the cell inner membrane. Its function is as follows. Part of the binding-protein-dependent transport system for glutamine; probably responsible for the translocation of the substrate across the membrane. This chain is Glutamine transport system permease protein GlnP (glnP), found in Escherichia coli O6:H1 (strain CFT073 / ATCC 700928 / UPEC).